Here is a 310-residue protein sequence, read N- to C-terminus: Malate dehydrogenase (310 aa).

NAD(+)-binding positions include 7–13 and Asp-34; that span reads GAAGGIG. Residues Arg-81 and Arg-87 each coordinate substrate. NAD(+)-binding positions include Asn-94 and 117 to 119; that span reads ITN. Positions 119 and 153 each coordinate substrate. His-177 serves as the catalytic Proton acceptor. Met-227 is a binding site for NAD(+).

It belongs to the LDH/MDH superfamily. MDH type 1 family. As to quaternary structure, homodimer.

The catalysed reaction is (S)-malate + NAD(+) = oxaloacetate + NADH + H(+). Its function is as follows. Catalyzes the reversible oxidation of malate to oxaloacetate. The sequence is that of Malate dehydrogenase from Idiomarina loihiensis (strain ATCC BAA-735 / DSM 15497 / L2-TR).